Consider the following 447-residue polypeptide: Maltoporin (447 aa).

The N-terminal stretch at 1–26 (MELRMKKVSVIAAAVAATLAAGSAFA) is a signal peptide.

It belongs to the porin LamB (TC 1.B.3) family. As to quaternary structure, homotrimer formed of three 18-stranded antiparallel beta-barrels, containing three independent channels.

It localises to the cell outer membrane. It carries out the reaction beta-maltose(in) = beta-maltose(out). In terms of biological role, involved in the transport of maltose and maltodextrins. The sequence is that of Maltoporin from Vibrio campbellii (strain ATCC BAA-1116).